Here is a 222-residue protein sequence, read N- to C-terminus: Alpha-S2-casein (222 aa).

An N-terminal signal peptide occupies residues 1–15 (MKFFIFTCLLAVALA). Phosphoserine occurs at positions 23, 24, 25, 28, 46, 71, 72, 73, 76, 144, 146, 150, and 158. A repeat spans 76-140 (SAEVATEEVK…AVPITPTLNR (65 aa)). The segment at residues 158–222 (STEVFTKKTK…TKVIPYVRYL (65 aa)) is a repeat.

Belongs to the alpha-casein family. Mammary gland specific. Secreted in milk.

It localises to the secreted. In terms of biological role, important role in the capacity of milk to transport calcium phosphate. Its function is as follows. Casocidin-I inhibits the growth of E.coli and S.carnosus. The protein is Alpha-S2-casein (CSN1S2) of Bos taurus (Bovine).